Here is a 256-residue protein sequence, read N- to C-terminus: Phosphomannomutase (256 aa).

Asp12 serves as the catalytic Nucleophile. Residues Asp12 and Asp14 each contribute to the Mg(2+) site. Asp14 functions as the Proton donor/acceptor in the catalytic mechanism. Positions 21, 123, 134, 141, 179, and 181 each coordinate alpha-D-mannose 1-phosphate. Asp209 lines the Mg(2+) pocket.

It belongs to the eukaryotic PMM family. Homodimer.

It is found in the cytoplasm. It carries out the reaction alpha-D-mannose 1-phosphate = D-mannose 6-phosphate. Its pathway is nucleotide-sugar biosynthesis; GDP-alpha-D-mannose biosynthesis; alpha-D-mannose 1-phosphate from D-fructose 6-phosphate: step 2/2. Its function is as follows. Involved in the synthesis of the GDP-mannose and dolichol-phosphate-mannose required for a number of critical mannosyl transfer reactions. This is Phosphomannomutase (SEC53) from Encephalitozoon cuniculi (strain GB-M1) (Microsporidian parasite).